Reading from the N-terminus, the 603-residue chain is Translation initiation factor IF-2 (603 aa).

A tr-type G domain is found at Thr112 to Asp279. Positions Gly121–Thr128 are G1. Position 121-128 (Gly121–Thr128) interacts with GTP. A G2 region spans residues Gly146–His150. Residues Asp167–Gly170 are G3. GTP is bound by residues Asp167–His171 and Asn221–Asp224. The interval Asn221–Asp224 is G4. The G5 stretch occupies residues Ser257–Leu259.

This sequence belongs to the TRAFAC class translation factor GTPase superfamily. Classic translation factor GTPase family. IF-2 subfamily.

Its subcellular location is the cytoplasm. In terms of biological role, one of the essential components for the initiation of protein synthesis. Protects formylmethionyl-tRNA from spontaneous hydrolysis and promotes its binding to the 30S ribosomal subunits. Also involved in the hydrolysis of GTP during the formation of the 70S ribosomal complex. In Mycoplasmopsis pulmonis (strain UAB CTIP) (Mycoplasma pulmonis), this protein is Translation initiation factor IF-2.